Reading from the N-terminus, the 553-residue chain is MDVDKELGMESVKAGASGKPEMRLGTQEETSEGDANESSLLVLSSNVPLLALEFLEIAQAKEKAFLPMVSHTFHMRTEESDASQEGDDLPKSSANTSHPKQDDSPKSSEETIQPKEGDIPKAPEETIQSKKEDLPKSSEKAIQPKESNIPKSSAKPIQPKLGNIPKASVKPSQPKEGDIPKAPEETIQSKKEDLPKSSEEAIQPKEGDIPKSSAKPIQPKLGNIAKTSVKPSQPKESDIPKSPEETIQPKEGDIPKSSAKPIQPKLGNIPKASVKPSQPKEGDISKSPEEAIQPKEGDLPKSLEEAIQPKEGDIPKSPEEAIQPKEGDIPKSLEEAIQPKEGDIPKSPEETIQPKKGDIPKSPEEAIQPKEGDIPKSPKQAIQPKEGDIPKSLEEAIPPKEIDIPKSPEETIQPKEDDSPKSLEEATPSKEGDILKPEEETMEFPEGDKVKVILSKEDFEASLKEAGERLVAVDFSATWCGPCRTIRPFFHALSVKHEDVVFLEVDADNCEEVVRECAIMCVPTFQFYKKEEKVDELCGALKEKLEAVIAELK.

2 disordered regions span residues 1–37 (MDVD…DANE) and 77–442 (TEES…EETM). A compositionally biased stretch (basic and acidic residues) spans 99–143 (PKQDDSPKSSEETIQPKEGDIPKAPEETIQSKKEDLPKSSEKAIQ). A run of 22 repeats spans residues 113 to 127 (QPKE…EETI), 128 to 142 (QSKK…EKAI), 143 to 157 (QPKE…AKPI), 158 to 172 (QPKL…VKPS), 173 to 187 (QPKE…EETI), 188 to 202 (QSKK…EEAI), 203 to 217 (QPKE…AKPI), 218 to 232 (QPKL…VKPS), 233 to 247 (QPKE…EETI), 248 to 262 (QPKE…AKPI), 263 to 277 (QPKL…VKPS), 278 to 292 (QPKE…EEAI), 293 to 307 (QPKE…EEAI), 308 to 322 (QPKE…EEAI), 323 to 337 (QPKE…EEAI), 338 to 352 (QPKE…EETI), 353 to 367 (QPKK…EEAI), 368 to 382 (QPKE…KQAI), 383 to 397 (QPKE…EEAI), 398 to 412 (PPKE…EETI), 413 to 427 (QPKE…EEAT), and 428 to 442 (PSKE…EETM). A 22 X 15 AA approximate tandem repeat of Q-P-K-X-G-D-I-P-K-S-[PS]-E-[KE]-X-I region spans residues 113–442 (QPKEGDIPKA…DILKPEEETM (330 aa)). Over residues 173 to 209 (QPKEGDIPKAPEETIQSKKEDLPKSSEEAIQPKEGDI) the composition is skewed to basic and acidic residues. Positions 233-254 (QPKESDIPKSPEETIQPKEGDI) are enriched in basic and acidic residues. 2 stretches are compositionally biased toward basic and acidic residues: residues 278 to 376 (QPKE…DIPK) and 385 to 439 (KEGD…KPEE). Ser-362 carries the phosphoserine modification. A Phosphoserine modification is found at Ser-392. Residues 429 to 553 (SKEGDILKPE…KLEAVIAELK (125 aa)) enclose the Thioredoxin domain. Cys-480 and Cys-483 are oxidised to a cystine.

In terms of tissue distribution, testis-specific. Only expressed during spermiogenesis, prominently in round and elongating spermatids.

It localises to the cytoplasm. In terms of biological role, probably plays a regulatory role in sperm development. May participate in regulation of fibrous sheath (FS) assembly by supporting the formation of disulfide bonds during sperm tail morphogenesis. May also be required to rectify incorrect disulfide pairing and generate suitable pairs between the FS constituents. Can reduce disulfide bonds in vitro in the presence of NADP and thioredoxin reductase. In Homo sapiens (Human), this protein is Thioredoxin domain-containing protein 2 (TXNDC2).